A 426-amino-acid chain; its full sequence is 10-deoxymethynolide desosaminyltransferase (426 aa).

Belongs to the glycosyltransferase 28 family. Forms a complex with DesVIII.

The catalysed reaction is 10-deoxymethynolide + dTDP-alpha-D-desosamine = 10-deoxymethymycin + dTDP + H(+). It functions in the pathway antibiotic biosynthesis. Functionally, involved in the biosynthesis of the macrolide antibiotics methymycin, neomethymycin, narbomycin, and pikromycin. Catalyzes the attachment of dTDP-D-desosamine onto 12- and 14-membered macrolactone rings 10-deoxymethynolide and narbonolide to produce 10-deoxymethymycin (YC-17) and narbomycin. DesVII is unique among glycosyltransferases in that it requires an additional protein component, DesVIII, for its activity. DesVII can recognize and process not only cyclic substrates of different ring size, but also a variety of linear substrates albeit with reduced, but measurable activities. Both L-sugars and D-sugars are recognized as substrates and variant substitutions at C-3 and C-4 are tolerated, but deoxygenation at C-6 is required. The polypeptide is 10-deoxymethynolide desosaminyltransferase (Streptomyces venezuelae).